Consider the following 424-residue polypeptide: CinA-like protein (424 aa).

This sequence belongs to the CinA family.

The sequence is that of CinA-like protein from Nostoc sp. (strain PCC 7120 / SAG 25.82 / UTEX 2576).